The following is a 294-amino-acid chain: Potassium-transporting ATPase subunit beta (294 aa).

At 1 to 36 (MAALQEKKSCSQRMAEFRQYCWNPDTGQMLGRTPAR) the chain is on the cytoplasmic side. Residues 37 to 57 (WVWISLYYAAFYVVMTGLFAL) traverse the membrane as a helical; Signal-anchor for type II membrane protein segment. Over 58–294 (CIYVLMQTID…KVEFKLTIQK (237 aa)) the chain is Extracellular. 5 N-linked (GlcNAc...) asparagine glycosylation sites follow: Asn-99, Asn-103, Asn-130, Asn-146, and Asn-161. An intrachain disulfide couples Cys-131 to Cys-152. Cysteines 162 and 178 form a disulfide. 2 N-linked (GlcNAc...) asparagine glycosylation sites follow: Asn-193 and Asn-225. The interval 194-294 (NTAPRVDCTF…KVEFKLTIQK (101 aa)) is immunoglobulin-like. A disulfide bridge links Cys-201 with Cys-266.

It belongs to the X(+)/potassium ATPases subunit beta family. As to quaternary structure, the ATPase pump is composed of two subunits: alpha (catalytic) and beta (regulatory). Interacts with alpha subunit ATP12A; this interaction is required for the formation of a functionally active pump and targeting at the plasma membrane. Interacts (via N-terminus) with alpha subunit ATP4A (via the P-domain). N-glycosylation is necessary for assembly and functional expression of the pump at the plasma membrane. As to expression, stomach.

The protein localises to the apical cell membrane. It localises to the cell membrane. In terms of biological role, the beta subunit of the gastric H(+)/K(+) ATPase pump which transports H(+) ions in exchange for K(+) ions across the apical membrane of parietal cells. Plays a structural and regulatory role in the assembly and membrane targeting of a functionally active pump. Within a transport cycle, the transfer of a H(+) ion across the membrane is coupled to ATP hydrolysis and is associated with a transient phosphorylation of the alpha subunit that shifts the pump conformation from inward-facing (E1) to outward-facing state (E2). Interacts with the phosphorylation domain of the alpha subunit and functions as a ratchet, stabilizing the lumenal-open E2 conformation and preventing the reverse reaction of the transport cycle. This is Potassium-transporting ATPase subunit beta (Atp4b) from Rattus norvegicus (Rat).